Reading from the N-terminus, the 300-residue chain is MKHGWLNIDKPYGVSSGSVVGKLKKMLQCKVGHAGTLDPLATGVLPIAFGEATKTTNYATDTLKSYEVTIQWGEQRDTDDKEGKIIRTSTLRPTEHSIKEALQQYVGVIQQIPSTFSAIKVGGMRAYSLSRMGKEVALAPRSVCITEIELLSVDSGSNTADLRITCGKGVYVRAVARDLGITLGCYGYVARLRRTMVGPFTEANIVTLQELETLVGENKLEEAVFPLSIVMSGLPHIEIDVETAKVVKNGRNIRLVDAALNGLYIVENCDMCYLSQAGGVPVAICEVVDGTAKPVRVFNV.

D38 functions as the Nucleophile in the catalytic mechanism.

This sequence belongs to the pseudouridine synthase TruB family. Type 1 subfamily.

It catalyses the reaction uridine(55) in tRNA = pseudouridine(55) in tRNA. Functionally, responsible for synthesis of pseudouridine from uracil-55 in the psi GC loop of transfer RNAs. This is tRNA pseudouridine synthase B from Anaplasma phagocytophilum (strain HZ).